Here is a 438-residue protein sequence, read N- to C-terminus: MPKIVVVGAVAGGATCASQIRRLDKESDIIIFEKDRDMSFANCALPYVIGEVVEDRRYALAYTPEEFYDRKQITVKTYHEVIAINDERQTVSVLNRKTNEQFEESYDKLILSPGASANSLGFESDITFTLRNLEDTDAIDQFIKANQVDKVLVVGAGYVSLEVLENLYERGLHPTLIHRSDKINKLMDADMNQPILDELDKREIPYRLNEEINAINGNEITFKSGKVEHYDMIIEGVGTHPNSKFIESSNIKLDRKGFIPVNDKFETNVPNIYAIGDIATSHYRHVDLPASVPLAWGAHRAASIVAEQIAGNDTIEFKGFLGNNIVKFFDYTFASVGVKPNELKQFDYKMVEVTQGAHANYYPGNSPLHLRVYYDTSNRQILRAAAVGKEGADKRIDVLSMAMMNQLTVDELTEFEVAYAPPYSHPKDLINMIGYKAK.

8–33 lines the FAD pocket; that stretch reads GAVAGGATCASQIRRLDKESDIIIFE. Thr-15, Gln-19, Arg-22, Ser-39, and Asn-42 together coordinate substrate. Catalysis depends on Cys-43, which acts as the Nucleophile. Cys-43 acts as the Redox-active in catalysis. Lys-71 serves as a coordination point for substrate. 151 to 166 serves as a coordination point for NADP(+); the sequence is VLVVGAGYVSLEVLEN. Residue 267 to 277 participates in FAD binding; the sequence is TNVPNIYAIGD. His-299 contributes to the substrate binding site. Tyr-419 contributes to the FAD binding site. Lys-427 is a substrate binding site.

It belongs to the class-III pyridine nucleotide-disulfide oxidoreductase family. As to quaternary structure, homodimer. Requires FAD as cofactor.

The catalysed reaction is NADP(+) + 2 CoA = CoA-disulfide + NADPH + H(+). Its function is as follows. Catalyzes specifically the NADPH-dependent reduction of coenzyme A disulfide. This Staphylococcus aureus (strain COL) protein is Coenzyme A disulfide reductase.